Reading from the N-terminus, the 355-residue chain is Tetraacyldisaccharide 4'-kinase (355 aa).

An ATP-binding site is contributed by 54-61; it reads TVGGAGKT.

The protein belongs to the LpxK family.

The enzyme catalyses a lipid A disaccharide + ATP = a lipid IVA + ADP + H(+). Its pathway is glycolipid biosynthesis; lipid IV(A) biosynthesis; lipid IV(A) from (3R)-3-hydroxytetradecanoyl-[acyl-carrier-protein] and UDP-N-acetyl-alpha-D-glucosamine: step 6/6. Transfers the gamma-phosphate of ATP to the 4'-position of a tetraacyldisaccharide 1-phosphate intermediate (termed DS-1-P) to form tetraacyldisaccharide 1,4'-bis-phosphate (lipid IVA). This chain is Tetraacyldisaccharide 4'-kinase, found in Rhizobium rhizogenes (strain K84 / ATCC BAA-868) (Agrobacterium radiobacter).